The following is a 1059-amino-acid chain: Cellulose synthase catalytic subunit A [UDP-forming] (1059 aa).

2 disordered regions span residues 1-159 (MDRN…RFDT) and 174-220 (MRQH…KHVA). Residues 15 to 36 (NNINSSGGSYNNSMNNSSNNIG) show a composition bias toward low complexity. 2 stretches are compositionally biased toward polar residues: residues 40–57 (GNNQ…QSNL) and 142–154 (NSPS…TSGG). Residues 181–194 (QEQQQQQQQQQQQQ) show a composition bias toward low complexity. A compositionally biased stretch (basic residues) spans 204–219 (QKKKPSSMQLSKKKHV). 3 helical membrane-spanning segments follow: residues 246-266 (FSHA…IFYF), 280-300 (ITFS…LGSA), and 306-323 (FTNP…QILA). The interval 328–628 (KHPTVMMYVC…FLGLLDADQQ (301 aa)) is catalytic subdomain A. Residue aspartate 370 is part of the active site. Positions 624 and 626 each coordinate substrate. Residues 701–761 (QPLYDIGGIM…EQRKRWAQGA (61 aa)) form a catalytic subdomain B region. The active site involves aspartate 717. Transmembrane regions (helical) follow at residues 790-810 (IYPF…IMSI) and 813-833 (VPIV…PVMV). A disordered region spans residues 933–953 (DNAQESSGKHKAEQSFRTSNK). The segment covering 939-953 (SGKHKAEQSFRTSNK) has biased composition (basic and acidic residues). 3 helical membrane-spanning segments follow: residues 963-983 (LFLP…SAVL), 993-1013 (WLLV…WSFI), and 1035-1055 (IVLF…KVCI).

This sequence belongs to the glycosyltransferase 2 family. Mg(2+) serves as cofactor.

The protein localises to the membrane. It carries out the reaction [(1-&gt;4)-beta-D-glucosyl](n) + UDP-alpha-D-glucose = [(1-&gt;4)-beta-D-glucosyl](n+1) + UDP + H(+). It participates in glycan metabolism; amoeba cellulose biosynthesis. In terms of biological role, catalytic subunit of cellulose synthase. It incorporates glucose from uridine 5'-diphosphate glucose (UDP-alpha-D-glucose) to cellulose (a (1-&gt;4)-beta-D-glucan), which is produced as an extracellular component for mechanical and chemical protection at the onset of the stalk formation, when the cells exhibit multicellular behavior during culmination. The polypeptide is Cellulose synthase catalytic subunit A [UDP-forming] (dcsA) (Dictyostelium discoideum (Social amoeba)).